Here is a 343-residue protein sequence, read N- to C-terminus: Protein RecA (343 aa).

64–71 (GPESSGKT) is an ATP binding site.

Belongs to the RecA family.

The protein resides in the cytoplasm. Can catalyze the hydrolysis of ATP in the presence of single-stranded DNA, the ATP-dependent uptake of single-stranded DNA by duplex DNA, and the ATP-dependent hybridization of homologous single-stranded DNAs. It interacts with LexA causing its activation and leading to its autocatalytic cleavage. The polypeptide is Protein RecA (Bacillus thuringiensis (strain Al Hakam)).